We begin with the raw amino-acid sequence, 342 residues long: Endolytic peptidoglycan transglycosylase RlpA (342 aa).

The first 26 residues, 1 to 26, serve as a signal peptide directing secretion; sequence MSKRVRSSLILPAVCGLGLAAVLLSS. Residue C27 is the site of N-palmitoyl cysteine attachment. C27 carries the S-diacylglycerol cysteine lipid modification. Residues 261-342 enclose the SPOR domain; the sequence is SLPADGLYLQ…LGQPTLVRPD (82 aa).

The protein belongs to the RlpA family.

The protein localises to the cell membrane. Functionally, lytic transglycosylase with a strong preference for naked glycan strands that lack stem peptides. This Pseudomonas aeruginosa (strain ATCC 15692 / DSM 22644 / CIP 104116 / JCM 14847 / LMG 12228 / 1C / PRS 101 / PAO1) protein is Endolytic peptidoglycan transglycosylase RlpA.